We begin with the raw amino-acid sequence, 587 residues long: L-ornithine N(5)-monooxygenase (587 aa).

FAD is bound by residues 53–61 (EKHTSFQWH) and Gln72. Substrate is bound at residue Lys77. Residue 235 to 238 (GGQS) participates in NADP(+) binding. Substrate-binding positions include 282–285 (NEVF) and Asn312. 312–314 (NYS) contacts NADP(+). The interval 488 to 511 (DNSAASGVSGASTPLTSPSEEEGK) is disordered. Positions 491 to 505 (AASGVSGASTPLTSP) are enriched in polar residues. 567–569 (TLL) is a binding site for FAD. Ser570 serves as a coordination point for substrate.

It belongs to the lysine N(6)-hydroxylase/L-ornithine N(5)-oxygenase family. As to quaternary structure, homotetramer. FAD is required as a cofactor.

It carries out the reaction L-ornithine + NADPH + O2 = N(5)-hydroxy-L-ornithine + NADP(+) + H2O. The catalysed reaction is L-ornithine + NADH + O2 = N(5)-hydroxy-L-ornithine + NAD(+) + H2O. It participates in siderophore biosynthesis; ferrichrome biosynthesis. In terms of biological role, L-ornithine N(5)-monooxygenase; part of the siderophore biosynthetic pathway. Omphalotus olearius produces ferrichrome A, but no other siderophore has been detected. Ferrichrome A consists of a hexapeptide ring made up of one glycine, two serine, and three N(5)-hydroxyornithine amino acid residues, the latter acylated by trans-(alpha-methyl)-glutaconic acid residues. The biosynthesis of ferrichrome A depends on the hydroxylation of ornithine to N(5)-hydroxyornithine, catalyzed by the monooxygenase omo1. The second step, the acylation of N(5)-hydroxy-L-ornithine is probably catalyzed by the N-acyltransferase ato1. Finally, assembly of ferrichrome A is catalyzed by the nonribosomal peptide synthase (NRPS) fso1. The protein is L-ornithine N(5)-monooxygenase of Omphalotus olearius (Jack o'lantern).